The sequence spans 355 residues: Alpha-N-acetylneuraminide alpha-2,8-sialyltransferase (355 aa).

Over 1–28 (MSPCGRALHTSRGAMAMLARKFPRTRLP) the chain is Cytoplasmic. A helical; Signal-anchor for type II membrane protein membrane pass occupies residues 29 to 47 (VGASALCVVVLCWLYIFPV). The Lumenal segment spans residues 48-355 (YRLPNEKEIV…CEEPSPQPTS (308 aa)). Asn-70 and Asn-118 each carry an N-linked (GlcNAc...) asparagine glycan. Cystine bridges form between Cys-137-Cys-286 and Cys-151-Cys-346. The CMP-N-acetyl-beta-neuraminate site is built by Asn-142 and Asn-165. N-linked (GlcNAc...) asparagine glycosylation is found at Asn-213 and Asn-244. Residues Ser-273, Thr-274, Gly-275, Trp-295, and His-309 each contribute to the CMP-N-acetyl-beta-neuraminate site. The active-site Proton donor/acceptor is His-321.

It belongs to the glycosyltransferase 29 family.

It is found in the golgi apparatus membrane. It catalyses the reaction an N-acetyl-alpha-neuraminyl-(2-&gt;3)-beta-D-galactosyl derivative + CMP-N-acetyl-beta-neuraminate = an N-acetyl-alpha-neuraminyl-(2-&gt;8)-N-acetyl-alpha-neuraminyl-(2-&gt;3)-beta-D-galactosyl derivative + CMP + H(+). The catalysed reaction is a ganglioside GM3 (d18:1(4E)) + CMP-N-acetyl-beta-neuraminate = a ganglioside GD3 (d18:1(4E)) + CMP + H(+). The enzyme catalyses a ganglioside GD3 (d18:1(4E)) + CMP-N-acetyl-beta-neuraminate = a ganglioside GT3 (d18:1(4E)) + CMP + H(+). It carries out the reaction a ganglioside GD1a (d18:1(4E)) + CMP-N-acetyl-beta-neuraminate = a ganglioside GT1a (d18:1(4E)) + CMP + H(+). It catalyses the reaction a ganglioside GT1b (d18:1(4E)) + CMP-N-acetyl-beta-neuraminate = a ganglioside GQ1b (d18:1(4E)) + CMP + H(+). The catalysed reaction is a ganglioside GM1b (d18:1(4E)) + CMP-N-acetyl-beta-neuraminate = a ganglioside GD1c (d18:1(4E)) + CMP + H(+). The enzyme catalyses a ganglioside GD3 + CMP-N-acetyl-beta-neuraminate = a ganglioside GT3 + CMP + H(+). It carries out the reaction [alpha-N-acetylneuraminyl-(2-&gt;8)](n)-alpha-N-acetylneuraminyl-(2-&gt;8)-alpha-N-acetylneuraminyl-(2-&gt;3)-beta-D-galactosyl-(1-&gt;4)-beta-D-glucosyl-(1&lt;-&gt;1)-ceramide + CMP-N-acetyl-beta-neuraminate = [alpha-N-acetylneuraminyl-(2-&gt;8)](n+1)-alpha-N-acetylneuraminyl-(2-&gt;8)-alpha-N-acetylneuraminyl-(2-&gt;3)-beta-D-galactosyl-(1-&gt;4)-beta-D-glucosyl-(1&lt;-&gt;1)-ceramide + CMP + H(+). The protein operates within protein modification; protein glycosylation. It functions in the pathway lipid metabolism; sphingolipid metabolism. Catalyzes the addition of sialic acid in alpha 2,8-linkage to the sialic acid moiety of the ganglioside GM3 to form ganglioside GD3; gangliosides are a subfamily of complex glycosphingolipds that contain one or more residues of sialic acid. Can catalyze the addition of a second alpha-2,8- sialic acid to GD3 to form GT3. Can use GM1b, GD1a and GT1b as acceptor substrates to synthesize GD1c, GT1a and GQ1b respectively. This is Alpha-N-acetylneuraminide alpha-2,8-sialyltransferase from Mus musculus (Mouse).